Consider the following 648-residue polypeptide: Magnetosome protein MamZ (648 aa).

Residues methionine 1–isoleucine 431 are major facilitator domain. A run of 18 helical transmembrane segments spans residues isoleucine 28–leucine 49, isoleucine 69–leucine 87, valine 94–leucine 113, leucine 119–valine 143, leucine 163–isoleucine 182, tyrosine 188–phenylalanine 207, phenylalanine 252–serine 273, alanine 285–tryptophan 305, alanine 317–phenylalanine 335, tryptophan 341–leucine 361, isoleucine 373–serine 395, alanine 407–alanine 428, proline 449–isoleucine 468, tyrosine 488–valine 506, tyrosine 518–valine 538, phenylalanine 558–phenylalanine 574, alanine 595–asparagine 612, and proline 618–tyrosine 634. Residues lysine 444–leucine 645 are ferric reductase-like domain, required for correct magnetite crystal formation.

This sequence in the N-terminal section; belongs to the major facilitator superfamily. As to quaternary structure, probably interacts with FtsZ-like and MamY proteins.

It localises to the magnetosome membrane. In terms of biological role, required for correct biomineralization of the magnetosome; probably converts and then transports some form of iron. It is partially functionally redundant with MamH. May function with MamX, MamY amd Mms6 in biomineralization. Despite its strong similarity to MsrQ (AC V6EX82) this protein does not genetically interact with bona fide MsrP (AC V6F0A4), which is encoded elsewhere in the genome. The sequence is that of Magnetosome protein MamZ from Magnetospirillum gryphiswaldense (strain DSM 6361 / JCM 21280 / NBRC 15271 / MSR-1).